A 212-amino-acid polypeptide reads, in one-letter code: Protein ERP5 (212 aa).

The N-terminal stretch at 1-20 (MKYNIVHGICLLFAITQAVG) is a signal peptide. The Lumenal portion of the chain corresponds to 21-178 (AVHFYAKSGE…FRNQSESANS (158 aa)). The GOLD domain maps to 31 to 124 (TKCFYEHLSR…TLRVFIELEI (94 aa)). An N-linked (GlcNAc...) asparagine glycan is attached at Asn-171. The helical transmembrane segment at 179-199 (KIMTWSVFQLLILLGTCAFQL) threads the bilayer. Over 200–212 (RYLKNFFVKQKVV) the chain is Cytoplasmic.

The protein belongs to the EMP24/GP25L family.

The protein resides in the endoplasmic reticulum membrane. Functionally, involved in vesicular protein trafficking. The protein is Protein ERP5 (ERP5) of Saccharomyces cerevisiae (strain ATCC 204508 / S288c) (Baker's yeast).